We begin with the raw amino-acid sequence, 208 residues long: Imidazoleglycerol-phosphate dehydratase (208 aa).

The segment at 1–22 (MTRRAAVKAPRAGAAARRGSVA) is disordered. Residues 7-19 (VKAPRAGAAARRG) are compositionally biased toward low complexity.

This sequence belongs to the imidazoleglycerol-phosphate dehydratase family.

Its subcellular location is the cytoplasm. It catalyses the reaction D-erythro-1-(imidazol-4-yl)glycerol 3-phosphate = 3-(imidazol-4-yl)-2-oxopropyl phosphate + H2O. It participates in amino-acid biosynthesis; L-histidine biosynthesis; L-histidine from 5-phospho-alpha-D-ribose 1-diphosphate: step 6/9. This is Imidazoleglycerol-phosphate dehydratase from Anaeromyxobacter dehalogenans (strain 2CP-C).